The following is a 267-amino-acid chain: Phosphate import ATP-binding protein PstB (267 aa).

Positions 21 to 262 (IEVKNLNFYY…PREKRTQDYI (242 aa)) constitute an ABC transporter domain. 53–60 (GPSGCGKS) lines the ATP pocket.

It belongs to the ABC transporter superfamily. Phosphate importer (TC 3.A.1.7) family. As to quaternary structure, the complex is composed of two ATP-binding proteins (PstB), two transmembrane proteins (PstC and PstA) and a solute-binding protein (PstS).

It is found in the cell inner membrane. The enzyme catalyses phosphate(out) + ATP + H2O = ADP + 2 phosphate(in) + H(+). In terms of biological role, part of the ABC transporter complex PstSACB involved in phosphate import. Responsible for energy coupling to the transport system. The sequence is that of Phosphate import ATP-binding protein PstB from Mesorhizobium japonicum (strain LMG 29417 / CECT 9101 / MAFF 303099) (Mesorhizobium loti (strain MAFF 303099)).